Consider the following 341-residue polypeptide: Terpene synthase 9 (341 aa).

Residues 81 to 86 (DDILDS) carry the DDxx(x)D/E motif motif. Residues 222–230 (NDMASYCKE) carry the NDxxSxxxD/E motif motif.

This sequence belongs to the terpene synthase family.

It catalyses the reaction (2E,6E)-farnesyl diphosphate = (1S,2S,4R)-beta-elemene + diphosphate. It carries out the reaction (2E,6E)-farnesyl diphosphate = germacrene D + diphosphate. Functionally, terpene synthase that converts its substrate farnesyl diphosphate (FPP) into the sesquiterpenes beta-elemene, germacrene D and a yet unidentified sesquiterpene. The sequence is that of Terpene synthase 9 from Dictyostelium purpureum (Slime mold).